Reading from the N-terminus, the 669-residue chain is DNA polymerase epsilon subunit B (669 aa).

Residues 96–115 (QISTRNGSADNLAKKAERSD) form a disordered region.

The protein belongs to the DNA polymerase epsilon subunit B family. As to quaternary structure, heterotetramer. Consists of four subunits: POL2, DPB2, DPB3 and DPB4.

It is found in the nucleus. Its function is as follows. As accessory component of the DNA polymerase epsilon (DNA polymerase II) participates in chromosomal DNA replication. This Debaryomyces hansenii (strain ATCC 36239 / CBS 767 / BCRC 21394 / JCM 1990 / NBRC 0083 / IGC 2968) (Yeast) protein is DNA polymerase epsilon subunit B (DPB2).